A 1510-amino-acid polypeptide reads, in one-letter code: Cysteine-tryptophan domain-containing zinc finger protein 5 (1510 aa).

A compositionally biased stretch (polar residues) spans 174-196; it reads YCQRTSSENDSNHSQQLLNSGPE. Disordered stretches follow at residues 174–198, 449–497, 555–574, and 582–616; these read YCQR…PEQK, SSLD…CAKD, KPNY…YVLD, and LHTE…DHKI. The segment covering 454-465 has biased composition (basic and acidic residues); sequence GFSHKTKSDKCN. Residues 467-476 show a composition bias toward polar residues; it reads QPVTTSSQLQ. 2 stretches are compositionally biased toward basic and acidic residues: residues 479-497 and 556-574; these read PAKK…CAKD and PNYD…YVLD. The CW-type zinc finger occupies 645-698; it reads SEPVDQWVCCDKCETWRLLPYGMNSDTLPKKWRCSMQSWLPGMNNCKLSEGETT. Residues cysteine 654, cysteine 657, cysteine 678, and cysteine 690 each coordinate Zn(2+). The segment covering 768–780 has biased composition (basic and acidic residues); the sequence is KQKRIESSDKGEK. Disordered stretches follow at residues 768–893, 1003–1050, and 1149–1194; these read KQKR…RDLF, STAA…LDRH, and LPIH…VRPD. Positions 781 to 790 are enriched in polar residues; that stretch reads STVTISSGQT. Residues 874–893 show a composition bias toward basic and acidic residues; it reads NSDRGARASDAGKSDPRDLF. Over residues 1003–1016 the composition is skewed to low complexity; the sequence is STAATSSSSKVSSS. Composition is skewed to polar residues over residues 1026–1040 and 1162–1182; these read TRTS…SPLR and PDQN…QAKL.

In terms of tissue distribution, highly expressed in young panicles. Expressed at low levels in leaf sheaths, nodes, internodes and axillary buds.

Its subcellular location is the nucleus. Binds to histones H3K4me1, H3K4me2 and H3K4me3 in GST pull-down assay. May facilitate the recruitment of effectors to mediate gene expression. The chain is Cysteine-tryptophan domain-containing zinc finger protein 5 from Oryza sativa subsp. japonica (Rice).